The following is an 810-amino-acid chain: Phenylalanine--tRNA ligase beta subunit (810 aa).

A tRNA-binding domain is found at 39–151; it reads RTWAAGVVVG…AGLQAGQPVG (113 aa). Residues 408-494 enclose the B5 domain; that stretch reads EPEHSITLRL…RLYGYDNFGE (87 aa). Residues D472, D478, E481, and E482 each contribute to the Mg(2+) site. Residues 716–809 enclose the FDX-ACB domain; it reads SSFPASDRDL…LVERFRVTLR (94 aa).

The protein belongs to the phenylalanyl-tRNA synthetase beta subunit family. Type 1 subfamily. Tetramer of two alpha and two beta subunits. The cofactor is Mg(2+).

The protein localises to the cytoplasm. It catalyses the reaction tRNA(Phe) + L-phenylalanine + ATP = L-phenylalanyl-tRNA(Phe) + AMP + diphosphate + H(+). This chain is Phenylalanine--tRNA ligase beta subunit (pheT), found in Synechococcus elongatus (strain ATCC 33912 / PCC 7942 / FACHB-805) (Anacystis nidulans R2).